The sequence spans 67 residues: Protein SlyX homolog (67 aa).

Belongs to the SlyX family.

This chain is Protein SlyX homolog, found in Mesorhizobium japonicum (strain LMG 29417 / CECT 9101 / MAFF 303099) (Mesorhizobium loti (strain MAFF 303099)).